Reading from the N-terminus, the 171-residue chain is 3-hydroxydecanoyl-[acyl-carrier-protein] dehydratase (171 aa).

Residue H70 is part of the active site.

This sequence belongs to the thioester dehydratase family. FabA subfamily. As to quaternary structure, homodimer.

It localises to the cytoplasm. It carries out the reaction a (3R)-hydroxyacyl-[ACP] = a (2E)-enoyl-[ACP] + H2O. The enzyme catalyses (3R)-hydroxydecanoyl-[ACP] = (2E)-decenoyl-[ACP] + H2O. The catalysed reaction is (2E)-decenoyl-[ACP] = (3Z)-decenoyl-[ACP]. Its pathway is lipid metabolism; fatty acid biosynthesis. Its function is as follows. Necessary for the introduction of cis unsaturation into fatty acids. Catalyzes the dehydration of (3R)-3-hydroxydecanoyl-ACP to E-(2)-decenoyl-ACP and then its isomerization to Z-(3)-decenoyl-ACP. Can catalyze the dehydratase reaction for beta-hydroxyacyl-ACPs with saturated chain lengths up to 16:0, being most active on intermediate chain length. The sequence is that of 3-hydroxydecanoyl-[acyl-carrier-protein] dehydratase from Shewanella denitrificans (strain OS217 / ATCC BAA-1090 / DSM 15013).